The sequence spans 152 residues: 3-dehydroquinate dehydratase (152 aa).

Tyr26 functions as the Proton acceptor in the catalytic mechanism. Residues Asn78, His84, and Asp91 each coordinate substrate. Catalysis depends on His104, which acts as the Proton donor. Substrate contacts are provided by residues 105-106 (IS) and Arg115.

The protein belongs to the type-II 3-dehydroquinase family. Homododecamer.

It carries out the reaction 3-dehydroquinate = 3-dehydroshikimate + H2O. It functions in the pathway metabolic intermediate biosynthesis; chorismate biosynthesis; chorismate from D-erythrose 4-phosphate and phosphoenolpyruvate: step 3/7. Functionally, catalyzes a trans-dehydration via an enolate intermediate. In Buchnera aphidicola subsp. Cinara cedri (strain Cc), this protein is 3-dehydroquinate dehydratase.